We begin with the raw amino-acid sequence, 353 residues long: Heterogeneous nuclear ribonucleoproteins A2/B1 (353 aa).

Position 1 is an N-acetylmethionine (methionine 1). Position 4 is a phosphothreonine (threonine 4). Residue leucine 5 forms a Glycyl lysine isopeptide (Lys-Gly) (interchain with G-Cter in SUMO2) linkage. The Nuclear localization signal signature appears at proline 9–arginine 15. RRM domains lie at arginine 21 to lysine 104 and lysine 112 to glutamine 191. A Glycyl lysine isopeptide (Lys-Gly) (interchain with G-Cter in SUMO2) cross-link involves residue lysine 22. Serine 29 bears the Phosphoserine mark. Position 38 is an omega-N-methylarginine (arginine 38). The residue at position 85 (serine 85) is a Phosphoserine. Lysine 104 carries the post-translational modification N6,N6-dimethyllysine; alternate. Residue lysine 104 forms a Glycyl lysine isopeptide (Lys-Gly) (interchain with G-Cter in SUMO2); alternate linkage. Glycyl lysine isopeptide (Lys-Gly) (interchain with G-Cter in SUMO2) cross-links involve residues lysine 112, lysine 120, and lysine 137. Threonine 140 is subject to Phosphothreonine. Serine 149 carries the post-translational modification Phosphoserine. Lysine 152 is covalently cross-linked (Glycyl lysine isopeptide (Lys-Gly) (interchain with G-Cter in SUMO2)). Residue threonine 159 is modified to Phosphothreonine. Residues lysine 168 and lysine 173 each participate in a glycyl lysine isopeptide (Lys-Gly) (interchain with G-Cter in SUMO2); alternate cross-link. N6-acetyllysine; alternate is present on residues lysine 168 and lysine 173. Threonine 176 carries the phosphothreonine modification. Lysine 186 is covalently cross-linked (Glycyl lysine isopeptide (Lys-Gly) (interchain with G-Cter in SUMO2)). Phosphoserine occurs at positions 189 and 201. The segment at methionine 193–tyrosine 353 is disordered. Residues glycine 202–proline 223 are compositionally biased toward gly residues. Arginine 203 carries the asymmetric dimethylarginine; alternate modification. Dimethylated arginine; alternate is present on arginine 203. Omega-N-methylarginine; alternate is present on arginine 203. Residue serine 212 is modified to Phosphoserine. Residue arginine 213 is modified to Asymmetric dimethylarginine; alternate. The residue at position 213 (arginine 213) is a Dimethylated arginine; alternate. Omega-N-methylarginine; alternate is present on arginine 213. Serine 225 carries the post-translational modification Phosphoserine. Arginine 228 carries the post-translational modification Omega-N-methylarginine. Phosphoserine is present on residues serine 231 and serine 236. Position 238 is an omega-N-methylarginine (arginine 238). At serine 259 the chain carries Phosphoserine. An Asymmetric dimethylarginine; alternate modification is found at arginine 266. Omega-N-methylarginine; alternate is present on arginine 266. Residues glutamine 308–tyrosine 347 form a nuclear targeting sequence region. A compositionally biased stretch (gly residues) spans asparagine 320 to tyrosine 353. Serine 324 bears the Phosphoserine mark. Position 325 is an omega-N-methylarginine (arginine 325). The residue at position 331 (tyrosine 331) is a Phosphotyrosine. Phosphoserine is present on residues serine 341 and serine 344. Tyrosine 347 bears the Phosphotyrosine mark. Position 350 is an omega-N-methylarginine (arginine 350).

In terms of assembly, homodimer; dimerization is required for nucleocytoplasmic translocation. Identified in the spliceosome C complex. Identified in a IGF2BP1-dependent mRNP granule complex containing untranslated mRNAs. Interacts with IGF2BP1. Interacts with C9orf72. Interacts with DGCR8. Interacts with TARDBP. Interacts with CKAP5. Interacts with TBK1. Interacts with STING1. Interacts with SRC. Interacts with PPIA/CYPA. Interacts (via C-terminus) with FAM76B; the interaction results in retention of HNRNPA2B1 in the nucleus and inhibition of the NF-kappa-B-mediated inflammatory pathway. Interacts with NF-kappa-B inhibitors NFKBIA and NFKBIE; the interaction may be mediated by the RRM2 domain of HNRNPA2B1, and HNRNPA2B1 may interact simultaneously with FAM76B and either NFKBIA or NFKBIE to form a complex. Sumoylated in exosomes, promoting miRNAs-binding. In terms of processing, asymmetric dimethylation at Arg-266 constitutes the major methylation site. According to a report, methylation affects subcellular location and promotes nuclear localization. According to another report, methylation at Arg-266 does not influence nucleocytoplasmic shuttling.

It localises to the nucleus. It is found in the nucleoplasm. The protein localises to the cytoplasm. Its subcellular location is the cytoplasmic granule. The protein resides in the secreted. It localises to the extracellular exosome. Its function is as follows. Heterogeneous nuclear ribonucleoprotein (hnRNP) that associates with nascent pre-mRNAs, packaging them into hnRNP particles. The hnRNP particle arrangement on nascent hnRNA is non-random and sequence-dependent and serves to condense and stabilize the transcripts and minimize tangling and knotting. Packaging plays a role in various processes such as transcription, pre-mRNA processing, RNA nuclear export, subcellular location, mRNA translation and stability of mature mRNAs. Forms hnRNP particles with at least 20 other different hnRNP and heterogeneous nuclear RNA in the nucleus. Involved in transport of specific mRNAs to the cytoplasm in oligodendrocytes and neurons: acts by specifically recognizing and binding the A2RE (21 nucleotide hnRNP A2 response element) or the A2RE11 (derivative 11 nucleotide oligonucleotide) sequence motifs present on some mRNAs, and promotes their transport to the cytoplasm. Specifically binds single-stranded telomeric DNA sequences, protecting telomeric DNA repeat against endonuclease digestion. Also binds other RNA molecules, such as primary miRNA (pri-miRNAs): acts as a nuclear 'reader' of the N6-methyladenosine (m6A) mark by specifically recognizing and binding a subset of nuclear m6A-containing pri-miRNAs. Binding to m6A-containing pri-miRNAs promotes pri-miRNA processing by enhancing binding of DGCR8 to pri-miRNA transcripts. Involved in miRNA sorting into exosomes following sumoylation, possibly by binding (m6A)-containing pre-miRNAs. Acts as a regulator of efficiency of mRNA splicing, possibly by binding to m6A-containing pre-mRNAs. Plays a role in the splicing of pyruvate kinase PKM by binding repressively to sequences flanking PKM exon 9, inhibiting exon 9 inclusion and resulting in exon 10 inclusion and production of the PKM M2 isoform. Also plays a role in the activation of the innate immune response. Mechanistically, senses the presence of viral DNA in the nucleus, homodimerizes and is demethylated by JMJD6. In turn, translocates to the cytoplasm where it activates the TBK1-IRF3 pathway, leading to interferon alpha/beta production. (Microbial infection) Involved in the transport of HIV-1 genomic RNA out of the nucleus, to the microtubule organizing center (MTOC), and then from the MTOC to the cytoplasm: acts by specifically recognizing and binding the A2RE (21 nucleotide hnRNP A2 response element) sequence motifs present on HIV-1 genomic RNA, and promotes its transport. The protein is Heterogeneous nuclear ribonucleoproteins A2/B1 (HNRNPA2B1) of Homo sapiens (Human).